The chain runs to 612 residues: Glutamine--fructose-6-phosphate aminotransferase [isomerizing] (612 aa).

The Nucleophile; for GATase activity role is filled by Cys-2. One can recognise a Glutamine amidotransferase type-2 domain in the interval 2-220 (CGIVGAIRAH…DGDIALLASD (219 aa)). SIS domains lie at 288–428 (AKSV…VRGL) and 461–602 (WAQQ…VDKP). Catalysis depends on Lys-607, which acts as the For Fru-6P isomerization activity.

In terms of assembly, homodimer.

It localises to the cytoplasm. The enzyme catalyses D-fructose 6-phosphate + L-glutamine = D-glucosamine 6-phosphate + L-glutamate. In terms of biological role, catalyzes the first step in hexosamine metabolism, converting fructose-6P into glucosamine-6P using glutamine as a nitrogen source. This is Glutamine--fructose-6-phosphate aminotransferase [isomerizing] from Neisseria meningitidis serogroup B (strain ATCC BAA-335 / MC58).